The primary structure comprises 159 residues: Gigasin-1 (159 aa).

Disordered regions lie at residues 1–33 and 80–159; these read GKATTKKVEIPERDRYDNGYDNHGHDDFEHDQT and KESY…KYRR.

As to expression, component of the organic matrix of calcified shell layers.

This Magallana gigas (Pacific oyster) protein is Gigasin-1.